A 163-amino-acid polypeptide reads, in one-letter code: MALNLQKKEEIICKIHETATRAVSVVVATLDGIAVNEVTKLRKEARDIGVCVHVIRNTLMRKVIENTPLACLREILTGQNIVAFSMNQPRDSARIFVKFTKNHEHFKIKGAVFEGKFIPASKINLLSDLPNHKEAIFRLITIMKTSSIGSLIHILHILSNQKQ.

The protein belongs to the universal ribosomal protein uL10 family. As to quaternary structure, part of the ribosomal stalk of the 50S ribosomal subunit. The N-terminus interacts with L11 and the large rRNA to form the base of the stalk. The C-terminus forms an elongated spine to which L12 dimers bind in a sequential fashion forming a multimeric L10(L12)X complex.

Functionally, forms part of the ribosomal stalk, playing a central role in the interaction of the ribosome with GTP-bound translation factors. The sequence is that of Large ribosomal subunit protein uL10 from Blochmanniella pennsylvanica (strain BPEN).